The sequence spans 409 residues: Histidine--tRNA ligase (409 aa).

This sequence belongs to the class-II aminoacyl-tRNA synthetase family. In terms of assembly, homodimer.

It is found in the cytoplasm. The enzyme catalyses tRNA(His) + L-histidine + ATP = L-histidyl-tRNA(His) + AMP + diphosphate + H(+). This chain is Histidine--tRNA ligase, found in Campylobacter fetus subsp. fetus (strain 82-40).